Reading from the N-terminus, the 352-residue chain is 4-hydroxy-3-methylbut-2-enyl diphosphate reductase (352 aa).

Cys36 is a binding site for [4Fe-4S] cluster. 2 residues coordinate (2E)-4-hydroxy-3-methylbut-2-enyl diphosphate: His76 and His114. His76 and His114 together coordinate dimethylallyl diphosphate. Isopentenyl diphosphate is bound by residues His76 and His114. Cys136 is a binding site for [4Fe-4S] cluster. Residue His164 participates in (2E)-4-hydroxy-3-methylbut-2-enyl diphosphate binding. His164 contributes to the dimethylallyl diphosphate binding site. His164 provides a ligand contact to isopentenyl diphosphate. Residue Glu166 is the Proton donor of the active site. Thr204 contributes to the (2E)-4-hydroxy-3-methylbut-2-enyl diphosphate binding site. Cys234 lines the [4Fe-4S] cluster pocket. The (2E)-4-hydroxy-3-methylbut-2-enyl diphosphate site is built by Ser262, Ser263, Asn264, and Ser309. The dimethylallyl diphosphate site is built by Ser262, Ser263, Asn264, and Ser309. The isopentenyl diphosphate site is built by Ser262, Ser263, Asn264, and Ser309.

The protein belongs to the IspH family. Requires [4Fe-4S] cluster as cofactor.

The enzyme catalyses isopentenyl diphosphate + 2 oxidized [2Fe-2S]-[ferredoxin] + H2O = (2E)-4-hydroxy-3-methylbut-2-enyl diphosphate + 2 reduced [2Fe-2S]-[ferredoxin] + 2 H(+). The catalysed reaction is dimethylallyl diphosphate + 2 oxidized [2Fe-2S]-[ferredoxin] + H2O = (2E)-4-hydroxy-3-methylbut-2-enyl diphosphate + 2 reduced [2Fe-2S]-[ferredoxin] + 2 H(+). It functions in the pathway isoprenoid biosynthesis; dimethylallyl diphosphate biosynthesis; dimethylallyl diphosphate from (2E)-4-hydroxy-3-methylbutenyl diphosphate: step 1/1. Its pathway is isoprenoid biosynthesis; isopentenyl diphosphate biosynthesis via DXP pathway; isopentenyl diphosphate from 1-deoxy-D-xylulose 5-phosphate: step 6/6. In terms of biological role, catalyzes the conversion of 1-hydroxy-2-methyl-2-(E)-butenyl 4-diphosphate (HMBPP) into a mixture of isopentenyl diphosphate (IPP) and dimethylallyl diphosphate (DMAPP). Acts in the terminal step of the DOXP/MEP pathway for isoprenoid precursor biosynthesis. This chain is 4-hydroxy-3-methylbut-2-enyl diphosphate reductase, found in Bifidobacterium longum (strain NCC 2705).